Reading from the N-terminus, the 417-residue chain is 4-hydroxy-3-methylbut-2-enyl diphosphate reductase (417 aa).

Cys56 serves as a coordination point for [4Fe-4S] cluster. His86 is a (2E)-4-hydroxy-3-methylbut-2-enyl diphosphate binding site. His86 provides a ligand contact to dimethylallyl diphosphate. His86 is an isopentenyl diphosphate binding site. Cys151 serves as a coordination point for [4Fe-4S] cluster. (2E)-4-hydroxy-3-methylbut-2-enyl diphosphate is bound at residue His179. His179 contributes to the dimethylallyl diphosphate binding site. His179 is an isopentenyl diphosphate binding site. Glu181 functions as the Proton donor in the catalytic mechanism. Thr244 provides a ligand contact to (2E)-4-hydroxy-3-methylbut-2-enyl diphosphate. Position 282 (Cys282) interacts with [4Fe-4S] cluster. Positions 311, 312, 313, and 374 each coordinate (2E)-4-hydroxy-3-methylbut-2-enyl diphosphate. Dimethylallyl diphosphate-binding residues include Ser311, Ser312, Asn313, and Ser374. Ser311, Ser312, Asn313, and Ser374 together coordinate isopentenyl diphosphate.

This sequence belongs to the IspH family. [4Fe-4S] cluster serves as cofactor.

It carries out the reaction isopentenyl diphosphate + 2 oxidized [2Fe-2S]-[ferredoxin] + H2O = (2E)-4-hydroxy-3-methylbut-2-enyl diphosphate + 2 reduced [2Fe-2S]-[ferredoxin] + 2 H(+). It catalyses the reaction dimethylallyl diphosphate + 2 oxidized [2Fe-2S]-[ferredoxin] + H2O = (2E)-4-hydroxy-3-methylbut-2-enyl diphosphate + 2 reduced [2Fe-2S]-[ferredoxin] + 2 H(+). Its pathway is isoprenoid biosynthesis; dimethylallyl diphosphate biosynthesis; dimethylallyl diphosphate from (2E)-4-hydroxy-3-methylbutenyl diphosphate: step 1/1. It participates in isoprenoid biosynthesis; isopentenyl diphosphate biosynthesis via DXP pathway; isopentenyl diphosphate from 1-deoxy-D-xylulose 5-phosphate: step 6/6. Catalyzes the conversion of 1-hydroxy-2-methyl-2-(E)-butenyl 4-diphosphate (HMBPP) into a mixture of isopentenyl diphosphate (IPP) and dimethylallyl diphosphate (DMAPP). Acts in the terminal step of the DOXP/MEP pathway for isoprenoid precursor biosynthesis. This chain is 4-hydroxy-3-methylbut-2-enyl diphosphate reductase, found in Gloeobacter violaceus (strain ATCC 29082 / PCC 7421).